Reading from the N-terminus, the 437-residue chain is GTPase Obg (437 aa).

Residues 2–160 form the Obg domain; it reads SMFLDTAKIS…RQLELELKIL (159 aa). One can recognise an OBG-type G domain in the interval 161-338; the sequence is ADVGLVGFPS…LLEATAELLA (178 aa). GTP-binding positions include 167 to 174, 192 to 196, 214 to 217, 284 to 287, and 319 to 321; these read GFPSVGKS, FTTIV, DLPG, NKMD, and SSL. Mg(2+) is bound by residues Ser-174 and Thr-194. The OCT domain maps to 359-437; that stretch reads GFAEAEKEFE…IGKFEFEFVD (79 aa).

This sequence belongs to the TRAFAC class OBG-HflX-like GTPase superfamily. OBG GTPase family. As to quaternary structure, monomer. The cofactor is Mg(2+).

Its subcellular location is the cytoplasm. Functionally, an essential GTPase which binds GTP, GDP and possibly (p)ppGpp with moderate affinity, with high nucleotide exchange rates and a fairly low GTP hydrolysis rate. Plays a role in control of the cell cycle, stress response, ribosome biogenesis and in those bacteria that undergo differentiation, in morphogenesis control. This Streptococcus pyogenes serotype M3 (strain ATCC BAA-595 / MGAS315) protein is GTPase Obg.